The following is a 31-amino-acid chain: Cycloviolacin-O19 (31 aa).

The segment at residues 1 to 31 (GTLPCGESCVWIPCISSVVGCSCKSKVCYKD) is a cross-link (cyclopeptide (Gly-Asp)). 3 disulfide bridges follow: Cys5–Cys21, Cys9–Cys23, and Cys14–Cys28.

In terms of processing, this is a cyclic peptide. As to expression, expressed in petioles and runners but not in leaves, petals and roots (at protein level).

In terms of biological role, probably participates in a plant defense mechanism. The protein is Cycloviolacin-O19 of Viola odorata (Sweet violet).